A 234-amino-acid chain; its full sequence is Thymidylate kinase (234 aa).

20–27 (GIDASGKT) is an ATP binding site.

This sequence belongs to the thymidylate kinase family.

The catalysed reaction is dTMP + ATP = dTDP + ADP. Its function is as follows. Phosphorylation of dTMP to form dTDP in both de novo and salvage pathways of dTTP synthesis. The chain is Thymidylate kinase from Mycoplasmopsis pulmonis (strain UAB CTIP) (Mycoplasma pulmonis).